Reading from the N-terminus, the 248-residue chain is Triosephosphate isomerase (248 aa).

Position 9–11 (9–11) interacts with substrate; sequence NWK. Residue histidine 94 is the Electrophile of the active site. Residue glutamate 166 is the Proton acceptor of the active site. Residues glycine 172, serine 212, and 233–234 each bind substrate; that span reads GG.

This sequence belongs to the triosephosphate isomerase family. In terms of assembly, homodimer.

Its subcellular location is the cytoplasm. The enzyme catalyses D-glyceraldehyde 3-phosphate = dihydroxyacetone phosphate. It functions in the pathway carbohydrate biosynthesis; gluconeogenesis. Its pathway is carbohydrate degradation; glycolysis; D-glyceraldehyde 3-phosphate from glycerone phosphate: step 1/1. Involved in the gluconeogenesis. Catalyzes stereospecifically the conversion of dihydroxyacetone phosphate (DHAP) to D-glyceraldehyde-3-phosphate (G3P). The protein is Triosephosphate isomerase of Clostridium botulinum (strain Loch Maree / Type A3).